Consider the following 210-residue polypeptide: Somatotropin-2 (210 aa).

An N-terminal signal peptide occupies residues 1 to 22 (MGQVFLLMPVLLVSCFLSQGAA). H38 is a Zn(2+) binding site. A disulfide bridge links C71 with C183. Residue E192 coordinates Zn(2+). A disulfide bond links C200 and C208.

The protein belongs to the somatotropin/prolactin family.

It localises to the secreted. In terms of biological role, growth hormone plays an important role in growth control and is involved in the regulation of several anabolic processes. Implicated as an osmoregulatory substance important for seawater adaptation. The polypeptide is Somatotropin-2 (gh2) (Oncorhynchus nerka (Sockeye salmon)).